Consider the following 257-residue polypeptide: Type III pantothenate kinase (257 aa).

11–18 (DSGNTAIK) is an ATP binding site. Residues Tyr96 and 103–106 (GCDR) each bind substrate. The Proton acceptor role is filled by Asp105. K(+) is bound at residue Asp125. Thr128 lines the ATP pocket. Position 179 (Thr179) interacts with substrate.

It belongs to the type III pantothenate kinase family. Homodimer. Requires NH4(+) as cofactor. It depends on K(+) as a cofactor.

It localises to the cytoplasm. It catalyses the reaction (R)-pantothenate + ATP = (R)-4'-phosphopantothenate + ADP + H(+). Its pathway is cofactor biosynthesis; coenzyme A biosynthesis; CoA from (R)-pantothenate: step 1/5. In terms of biological role, catalyzes the phosphorylation of pantothenate (Pan), the first step in CoA biosynthesis. The polypeptide is Type III pantothenate kinase (Nitrosomonas eutropha (strain DSM 101675 / C91 / Nm57)).